The following is a 417-amino-acid chain: BSD domain-containing protein 1-B (417 aa).

Residues 153–205 (WLAYWDPEQRKAEISEPLVTSPSIRALFTKMVPAAVSHSEFWQRYFYKVHQLE) enclose the BSD domain. Disordered stretches follow at residues 215 to 234 (KQRA…EEEE), 262 to 292 (HVED…SISP), and 323 to 390 (AAET…DFDM). Over residues 262-278 (HVEDKSEKTAELNRDHT) the composition is skewed to basic and acidic residues. Over residues 281–292 (TSPSESSESISP) the composition is skewed to low complexity. Over residues 332–343 (PVEQTGKSNAQM) the composition is skewed to polar residues. The segment covering 345–356 (THREDPPSDLRV) has biased composition (basic and acidic residues). Residues 360–379 (NSDSGKSTPSNNGQKGSSTD) show a composition bias toward polar residues. Over residues 380 to 390 (VSEDWEKDFDM) the composition is skewed to acidic residues.

This Xenopus laevis (African clawed frog) protein is BSD domain-containing protein 1-B (bsdc1-b).